The chain runs to 652 residues: MYFRIRKLDEPDSNDNDFYVVIPVKDIFTWFCSIYSLDKTSIFIHDINNLNPNEYTIQQVIPGSDISPIKNLNEYLTNDIIITNTLDLNDLETFIYLLTNGANNSEGIKLLVTWCVYYGRLDVLNYLVDNNILPTENTLRDYLPITISENHDEVYKFIIDHEFHLGYKSNNLSWILTSEYKYINSLKYTLSNDLKLSDLIFMHHLKVEILQELFSSGYEFDNRLFEKICRTTNITLIKFFMDIGFDPMNIVIQPNQLCIYLANILLDSGRQFTQNEISQIITFSIVSDDYWDIIAFTERTGYNWNNINDNFINCIIRRGSLDHLKDILNRTSLNINRFIDNIVITAIFDSRKDLIMYAYENNVDIAKYIQSLPYSNDTNFIKWYIELLNSDGNFKSDNNIINFINHGTGTHKFEILKYLLENDCYEDPNYIIEHICCPFNIGKNNTDIHEPIVVELLNLCESKQIDVPKLTPIIISNYLLSNRKISNTLLKFGTTIYSDGIIDNDSDINNILLNIINNQCEEIKDYVYNKPQLWTNKSIMLATIISENIDLFDFLLELNRDNNLYLEQSFILCANSIKMLKHFVNSINLDITSRVRETYVYAYSIIKNKSVASYLLLYYGNDMIYDSDNIFENQKNLFVNDFLREIKNLNFV.

ANK repeat units follow at residues 77–105, 106–136, 138–167, 192–219, 220–242, 243–274, 307–337, 396–430, 468–498, and 535–564; these read TNDIIITNTLDLNDLETFIYLLTNGANNS, EGIKLLVTWCVYYGRLDVLNYLVDNNILPTE, TLRDYLPITISENHDEVYKFIIDHEFHLGY, NDLKLSDLIFMHHLKVEILQELFSSGYE, FDNRLFEKICRTTNITLIKFFMD, IGFDPMNIVIQPNQLCIYLANILLDSGRQFTQ, INDNFINCIIRRGSLDHLKDILNRTSLNINR, SDNNIINFINHGTGTHKFEILKYLLENDCYEDPNY, PKLTPIIISNYLLSNRKISNTLLKFGTTIYS, and TNKSIMLATIISENIDLFDFLLELNRDNNL.

This Acanthamoeba polyphaga mimivirus (APMV) protein is Putative ankyrin repeat protein R734.